The following is a 1145-amino-acid chain: Trafficking protein particle complex subunit 10 (1145 aa).

The protein belongs to the TMEM1 family. As to quaternary structure, part of the multisubunit TRAPP (transport protein particle) complex. Interacts with Shal (via C-terminal dendritic targeting motif). As to expression, co-expressed with Shal in the nervous system.

It localises to the golgi apparatus. Its subcellular location is the cis-Golgi network. It is found in the cell projection. The protein resides in the dendrite. The protein localises to the perikaryon. Its function is as follows. May play a role in vesicular transport from endoplasmic reticulum to Golgi. Has a role in one of the several mechanisms underlying dendritic localization of Shal channels. This is Trafficking protein particle complex subunit 10 (SIDL) from Drosophila melanogaster (Fruit fly).